Consider the following 1134-residue polypeptide: DENN domain-containing protein 2B (1134 aa).

The span at 1 to 13 (MTMTANKNSSITH) shows a compositional bias: polar residues. A disordered region spans residues 1–90 (MTMTANKNSS…DPSPETSPPI (90 aa)). Residues Ser-30 and Ser-32 each carry the phosphoserine modification. Pro residues predominate over residues 32 to 43 (SPPPVLYPPRSP). Phosphothreonine is present on Thr-228. Ser-230 carries the post-translational modification Phosphoserine. Disordered regions lie at residues 233–273 (SYPE…GIRK) and 289–571 (LKEQ…KRHS). The span at 249–259 (SLYRLEKRPGR) shows a compositional bias: basic and acidic residues. Over residues 315–348 (GTLGTLEEPTGTASVSPSSRAGGVAGVAGEAGPP) the composition is skewed to low complexity. The residue at position 361 (Thr-361) is a Phosphothreonine. The residue at position 365 (Ser-365) is a Phosphoserine. Pro residues predominate over residues 370 to 385 (LLPPKSSPDPAVNPVP). Residues 389 to 399 (RTFEYEADKNP) are compositionally biased toward basic and acidic residues. Residues 406-428 (GLPPSPTPAAPPPLPSTPAPPVT) are compositionally biased toward pro residues. Residues 429-443 (RRPKKDMRGHRKSQN) are compositionally biased toward basic residues. Over residues 453–478 (SSLQSLYPSSPTENGTESQPKFGSKS) the composition is skewed to polar residues. The residue at position 479 (Thr-479) is a Phosphothreonine. Composition is skewed to polar residues over residues 511-521 (KSQQLSENSLD) and 542-555 (SLKS…SGNW). Phosphoserine is present on Ser-542. A compositionally biased stretch (basic residues) spans 559–570 (KSHRLPRLPKRH). Phosphoserine is present on residues Ser-571 and Ser-619. Residues 633–658 (LSMSSLETASLRDENSESESDSDDRF) are disordered. The 149-residue stretch at 695–843 (EYFVVVSLKK…PFPAPGKTIK (149 aa)) folds into the uDENN domain. A cDENN domain is found at 865–998 (RLEHVDFECL…LQAALEQALE (134 aa)). The 94-residue stretch at 1000–1093 (KSELISQDSD…QDRELRKCRA (94 aa)) folds into the dDENN domain.

As to quaternary structure, interacts with ITSN1 and GRB2. Isoform 1 interacts with the SH3 domain of ABL1. In terms of processing, phosphorylated. Phosphorylation decreases ITSN1 binding.

It localises to the cytoplasm. The protein resides in the cell cortex. The protein localises to the cell membrane. Its subcellular location is the recycling endosome. Its function is as follows. May be involved in cytoskeletal organization and tumorogenicity. Seems to be involved in a signaling transduction pathway leading to activation of MAPK1/ERK2. Plays a role in EGFR trafficking from recycling endosomes back to the cell membrane. In terms of biological role, guanine nucleotide exchange factor (GEF) which may activate RAB9A and RAB9B. Promotes the exchange of GDP to GTP, converting inactive GDP-bound Rab proteins into their active GTP-bound form. Functionally, may block ERK2 activation stimulated by ABL1. May alter cell morphology and cell growth. This Mus musculus (Mouse) protein is DENN domain-containing protein 2B (Dennd2b).